A 387-amino-acid chain; its full sequence is MPCQHYQRGDCRSCQWLATPYSTQLAKKQQHLQQQLQKLDCTQIQWQAPYTSILQGFRNKAKMAVSGMVERPILSHPQSEADLTDCPLYPAHFTNIFTILRDFIARAGLVPYNIQKQKGELKYILLTESQLDGGLMLRFVLRSEKKLPLVQRELPGLLAKLPQLKVVSLNIQPQHAAILEGEKEIFLTEQHTLEECFNQIPLFIRPQGFFQTNPQVAQGLYGTAQHWVQELPVHRLWDLFCGVGGFGLHCAQALQTQYPDRIIQLTGIEISASAIEAATLSAQKLGLKQVKFQSLDAKHFALAQSPAAQDDTPELVIVNPPRRGIGIELAQFLNQLAPHFILYSSCNAETMGKDVLHLSDYQLKKVQLFDMFPHTSHYEVLCLLERK.

[4Fe-4S] cluster contacts are provided by cysteine 3, cysteine 11, cysteine 14, and cysteine 86. Residues glutamine 211, phenylalanine 240, glutamate 269, and asparagine 319 each coordinate S-adenosyl-L-methionine. The active-site Nucleophile is cysteine 346.

This sequence belongs to the class I-like SAM-binding methyltransferase superfamily. RNA M5U methyltransferase family. RlmC subfamily.

It carries out the reaction uridine(747) in 23S rRNA + S-adenosyl-L-methionine = 5-methyluridine(747) in 23S rRNA + S-adenosyl-L-homocysteine + H(+). In terms of biological role, catalyzes the formation of 5-methyl-uridine at position 747 (m5U747) in 23S rRNA. This Pasteurella multocida (strain Pm70) protein is 23S rRNA (uracil(747)-C(5))-methyltransferase RlmC.